The sequence spans 397 residues: 2,3,4,5-tetrahydropyridine-2,6-dicarboxylate N-succinyltransferase (397 aa).

Glu265 serves as the catalytic Acyl-anhydride intermediate. Residues Arg267, Gly282, Ser285, Ala308, 323-324 (DA), Gly331, Lys360, and 373-376 (RQNS) each bind succinyl-CoA.

This sequence belongs to the type 2 tetrahydrodipicolinate N-succinyltransferase family. As to quaternary structure, homotrimer.

The protein localises to the cytoplasm. It catalyses the reaction (S)-2,3,4,5-tetrahydrodipicolinate + succinyl-CoA + H2O = (S)-2-succinylamino-6-oxoheptanedioate + CoA. It functions in the pathway amino-acid biosynthesis; L-lysine biosynthesis via DAP pathway; LL-2,6-diaminopimelate from (S)-tetrahydrodipicolinate (succinylase route): step 1/3. Functionally, catalyzes the conversion of the cyclic tetrahydrodipicolinate (THDP) into the acyclic N-succinyl-L-2-amino-6-oxopimelate using succinyl-CoA. This Sulfurovum sp. (strain NBC37-1) protein is 2,3,4,5-tetrahydropyridine-2,6-dicarboxylate N-succinyltransferase.